The following is a 181-amino-acid chain: Der GTPase-activating protein YihI (181 aa).

The disordered stretch occupies residues Met-1 to Ile-73. Positions Asn-22–Glu-32 are enriched in basic and acidic residues. Basic residues predominate over residues Leu-33–Leu-42. Over residues Gln-55 to Ile-67 the composition is skewed to basic and acidic residues.

It belongs to the YihI family. Interacts with Der.

Its function is as follows. A GTPase-activating protein (GAP) that modifies Der/EngA GTPase function. May play a role in ribosome biogenesis. This chain is Der GTPase-activating protein YihI, found in Aliivibrio fischeri (strain MJ11) (Vibrio fischeri).